We begin with the raw amino-acid sequence, 4743 residues long: Apolipoprotein B-100 (4743 aa).

An N-terminal signal peptide occupies residues 1–27 (MGPQRPALRAPLLLLFLLLFLDTSVWA). Residues 29-113 (DATRFKHLRK…KNSEEFASAM (85 aa)) form a heparin-binding region. Residues 33 to 660 (FKHLRKYVYS…PSSYLPKESM (628 aa)) form the Vitellogenin domain. An intrachain disulfide couples C65 to C84. A glycan (N-linked (GlcNAc...) asparagine) is linked at N172. 4 cysteine pairs are disulfide-bonded: C173–C199, C232–C248, C372–C377, and C466–C501. Residues 219–293 (VRPLSTLISS…RFFRGGINQV (75 aa)) are heparin-binding. Residues 890 to 947 (NTNFFHESGLEARVALKAGQLKVIIPSPKRPVKLFSGSNTLHLVSTTKTEVIPPLIEN) are heparin-binding. An intrachain disulfide couples C954 to C964. N-linked (GlcNAc...) asparagine glycosylation is found at N971, N1336, N1345, and N1491. N6-acetyllysine is present on K1973. S2006 bears the Phosphoserine mark. Residues 2010–2145 (NDAFDEPREF…EKLSQLETYA (136 aa)) form a heparin-binding region. N-linked (GlcNAc...) asparagine glycosylation is found at N2094, N2522, N2662, N2741, N2791, N2897, N2944, and N3063. Positions 3123–3198 (FLKTTKQSFD…KIKFDKYKTE (76 aa)) are heparin-binding. Residues 3136–3146 (KAQYKKNRDKH) are basic (possible receptor binding region). 3 N-linked (GlcNAc...) asparagine glycosylation sites follow: N3186, N3299, and N3321. The segment at 3336-3356 (VTDALQYKLEGTSRLMRKKVL) is LDL receptor binding. The tract at residues 3346 to 3479 (GTSRLMRKKV…QEYSGSVANE (134 aa)) is heparin-binding. Residues 3349–3357 (RLMRKKVLK) are basic (possible receptor binding region). N3428, N3715, and N3828 each carry an N-linked (GlcNAc...) asparagine glycan. S3981 carries the phosphoserine modification. At T3985 the chain carries Phosphothreonine. Residues N4203 and N4232 are each glycosylated (N-linked (GlcNAc...) asparagine).

In terms of assembly, interacts with PCSK9. Interacts with MTTP. Interacts with AUP1. Interacts with CIDEB. Palmitoylated; structural requirement for proper assembly of the hydrophobic core of the lipoprotein particle. As to expression, detected in intestine and liver (at protein level).

The protein localises to the cytoplasm. It localises to the secreted. It is found in the lipid droplet. Apolipoprotein B is a major protein constituent of chylomicrons (apo B-48), LDL (apo B-100) and VLDL (apo B-100). Apo B-100 functions as a recognition signal for the cellular binding and internalization of LDL particles by the apoB/E receptor. This Rattus norvegicus (Rat) protein is Apolipoprotein B-100 (Apob).